A 305-amino-acid polypeptide reads, in one-letter code: Mycothiol acetyltransferase (305 aa).

N-acetyltransferase domains lie at 10-153 (DRLD…LVVP) and 156-305 (ISLR…YARA). Glu-38 lines the 1D-myo-inositol 2-(L-cysteinylamino)-2-deoxy-alpha-D-glucopyranoside pocket. Residue 82–84 (LAV) participates in acetyl-CoA binding. Positions 183, 225, and 238 each coordinate 1D-myo-inositol 2-(L-cysteinylamino)-2-deoxy-alpha-D-glucopyranoside. Acetyl-CoA contacts are provided by residues 242–244 (VAI) and 249–255 (QGRGLGR). 1D-myo-inositol 2-(L-cysteinylamino)-2-deoxy-alpha-D-glucopyranoside is bound at residue Tyr-276. 281-286 (NESALH) is an acetyl-CoA binding site.

It belongs to the acetyltransferase family. MshD subfamily. As to quaternary structure, monomer.

The catalysed reaction is 1D-myo-inositol 2-(L-cysteinylamino)-2-deoxy-alpha-D-glucopyranoside + acetyl-CoA = mycothiol + CoA + H(+). Functionally, catalyzes the transfer of acetyl from acetyl-CoA to desacetylmycothiol (Cys-GlcN-Ins) to form mycothiol. The chain is Mycothiol acetyltransferase from Rhodococcus jostii (strain RHA1).